The sequence spans 195 residues: Thymidine kinase (195 aa).

Residues 15–22 (GSMFSGKS) and 88–91 (DEVQ) contribute to the ATP site. The Proton acceptor role is filled by glutamate 89. The Zn(2+) site is built by cysteine 145, cysteine 148, cysteine 183, and cysteine 186.

The protein belongs to the thymidine kinase family. In terms of assembly, homotetramer.

The protein localises to the cytoplasm. The enzyme catalyses thymidine + ATP = dTMP + ADP + H(+). The sequence is that of Thymidine kinase from Bacillus cereus (strain AH187).